Here is a 210-residue protein sequence, read N- to C-terminus: Pyridoxine/pyridoxamine 5'-phosphate oxidase (210 aa).

Substrate-binding positions include 7-10 (REDY) and Lys-65. FMN is bound by residues 60–65 (RVVLLK), 75–76 (FT), Arg-81, Lys-82, and Gln-104. The substrate site is built by Tyr-122, Arg-126, and Ser-130. FMN contacts are provided by residues 139–140 (QS) and Trp-183. Residue 189–191 (RLH) coordinates substrate. Arg-193 lines the FMN pocket.

This sequence belongs to the pyridoxamine 5'-phosphate oxidase family. In terms of assembly, homodimer. FMN is required as a cofactor.

It catalyses the reaction pyridoxamine 5'-phosphate + O2 + H2O = pyridoxal 5'-phosphate + H2O2 + NH4(+). The enzyme catalyses pyridoxine 5'-phosphate + O2 = pyridoxal 5'-phosphate + H2O2. It functions in the pathway cofactor metabolism; pyridoxal 5'-phosphate salvage; pyridoxal 5'-phosphate from pyridoxamine 5'-phosphate: step 1/1. The protein operates within cofactor metabolism; pyridoxal 5'-phosphate salvage; pyridoxal 5'-phosphate from pyridoxine 5'-phosphate: step 1/1. In terms of biological role, catalyzes the oxidation of either pyridoxine 5'-phosphate (PNP) or pyridoxamine 5'-phosphate (PMP) into pyridoxal 5'-phosphate (PLP). The chain is Pyridoxine/pyridoxamine 5'-phosphate oxidase from Actinobacillus succinogenes (strain ATCC 55618 / DSM 22257 / CCUG 43843 / 130Z).